The primary structure comprises 179 residues: Early E3 20.1 kDa glycoprotein (179 aa).

5 N-linked (GlcNAc...) asparagine; by host glycosylation sites follow: N29, N57, N70, N75, and N123.

It belongs to the adenoviridae E3_20 family.

Its function is as follows. E3 proteins seem to be dispensable for virus growth in tissue culture cells. They are potentially important for virus growth under special conditions; E3 region may help adenoviruses to evade the immune surveillance of the host. This is Early E3 20.1 kDa glycoprotein from Homo sapiens (Human).